The following is a 223-amino-acid chain: Ribose-5-phosphate isomerase A (223 aa).

Residues 32–35 (TGST), 83–86 (DGAD), and 96–99 (KGGG) contribute to the substrate site. Glutamate 105 serves as the catalytic Proton acceptor. Lysine 123 lines the substrate pocket.

This sequence belongs to the ribose 5-phosphate isomerase family. In terms of assembly, homodimer.

It catalyses the reaction aldehydo-D-ribose 5-phosphate = D-ribulose 5-phosphate. Its pathway is carbohydrate degradation; pentose phosphate pathway; D-ribose 5-phosphate from D-ribulose 5-phosphate (non-oxidative stage): step 1/1. Catalyzes the reversible conversion of ribose-5-phosphate to ribulose 5-phosphate. This is Ribose-5-phosphate isomerase A from Acinetobacter baumannii (strain ATCC 17978 / DSM 105126 / CIP 53.77 / LMG 1025 / NCDC KC755 / 5377).